A 241-amino-acid chain; its full sequence is LexA repressor (241 aa).

The H-T-H motif DNA-binding region spans 41-61; the sequence is FREIGNAAGLKSPSSVKHQLQ. Residues Ser165 and Lys202 each act as for autocatalytic cleavage activity in the active site.

It belongs to the peptidase S24 family. Homodimer.

It catalyses the reaction Hydrolysis of Ala-|-Gly bond in repressor LexA.. Its function is as follows. Represses a number of genes involved in the response to DNA damage (SOS response), including recA and lexA. In the presence of single-stranded DNA, RecA interacts with LexA causing an autocatalytic cleavage which disrupts the DNA-binding part of LexA, leading to derepression of the SOS regulon and eventually DNA repair. The chain is LexA repressor from Bifidobacterium longum (strain DJO10A).